A 177-amino-acid chain; its full sequence is Protein GrpE (177 aa).

It belongs to the GrpE family. In terms of assembly, homodimer.

The protein resides in the cytoplasm. Participates actively in the response to hyperosmotic and heat shock by preventing the aggregation of stress-denatured proteins, in association with DnaK and GrpE. It is the nucleotide exchange factor for DnaK and may function as a thermosensor. Unfolded proteins bind initially to DnaJ; upon interaction with the DnaJ-bound protein, DnaK hydrolyzes its bound ATP, resulting in the formation of a stable complex. GrpE releases ADP from DnaK; ATP binding to DnaK triggers the release of the substrate protein, thus completing the reaction cycle. Several rounds of ATP-dependent interactions between DnaJ, DnaK and GrpE are required for fully efficient folding. This is Protein GrpE from Thermus thermophilus (strain ATCC BAA-163 / DSM 7039 / HB27).